Consider the following 97-residue polypeptide: U6-theraphotoxin-Hhn1a 4 (97 aa).

Residues 1–33 (MLIKQFSRRSKNMKVQILLAFAALFVLAVGSYA) form the signal peptide. A propeptide spanning residues 34–61 (SESKKLDLRDALLSAMFSADYQLNPQER) is cleaved from the precursor. 3 disulfides stabilise this stretch: Cys-63/Cys-77, Cys-70/Cys-82, and Cys-76/Cys-89.

The protein belongs to the neurotoxin 10 (Hwtx-1) family. 12 (Hntx-12) subfamily. Expressed by the venom gland.

The protein localises to the secreted. Ion channel inhibitor. In Cyriopagopus hainanus (Chinese bird spider), this protein is U6-theraphotoxin-Hhn1a 4.